Reading from the N-terminus, the 484-residue chain is Aspartyl/glutamyl-tRNA(Asn/Gln) amidotransferase subunit B (484 aa).

The protein belongs to the GatB/GatE family. GatB subfamily. In terms of assembly, heterotrimer of A, B and C subunits.

It catalyses the reaction L-glutamyl-tRNA(Gln) + L-glutamine + ATP + H2O = L-glutaminyl-tRNA(Gln) + L-glutamate + ADP + phosphate + H(+). It carries out the reaction L-aspartyl-tRNA(Asn) + L-glutamine + ATP + H2O = L-asparaginyl-tRNA(Asn) + L-glutamate + ADP + phosphate + 2 H(+). In terms of biological role, allows the formation of correctly charged Asn-tRNA(Asn) or Gln-tRNA(Gln) through the transamidation of misacylated Asp-tRNA(Asn) or Glu-tRNA(Gln) in organisms which lack either or both of asparaginyl-tRNA or glutaminyl-tRNA synthetases. The reaction takes place in the presence of glutamine and ATP through an activated phospho-Asp-tRNA(Asn) or phospho-Glu-tRNA(Gln). The protein is Aspartyl/glutamyl-tRNA(Asn/Gln) amidotransferase subunit B of Anaeromyxobacter dehalogenans (strain 2CP-1 / ATCC BAA-258).